The chain runs to 41 residues: U3-theraphotoxin-Hs1a (41 aa).

Disulfide bonds link C2-C16, C9-C37, and C17-C40.

This sequence belongs to the neurotoxin 14 (magi-1) family. 01 (HNTX-16) subfamily. Expressed by the venom gland.

It localises to the secreted. Functionally, intracerebroventricular injection paralyzes mice. Has no effect on voltage-gated sodium currents. The protein is U3-theraphotoxin-Hs1a of Cyriopagopus schmidti (Chinese bird spider).